The primary structure comprises 362 residues: Chorismate synthase (362 aa).

Residues R48 and R54 each coordinate NADP(+). FMN-binding positions include 125–127, 241–242, G286, 301–305, and R327; these read RSS, NA, and KPTSS.

Belongs to the chorismate synthase family. Homotetramer. FMNH2 is required as a cofactor.

The enzyme catalyses 5-O-(1-carboxyvinyl)-3-phosphoshikimate = chorismate + phosphate. Its pathway is metabolic intermediate biosynthesis; chorismate biosynthesis; chorismate from D-erythrose 4-phosphate and phosphoenolpyruvate: step 7/7. Catalyzes the anti-1,4-elimination of the C-3 phosphate and the C-6 proR hydrogen from 5-enolpyruvylshikimate-3-phosphate (EPSP) to yield chorismate, which is the branch point compound that serves as the starting substrate for the three terminal pathways of aromatic amino acid biosynthesis. This reaction introduces a second double bond into the aromatic ring system. The chain is Chorismate synthase from Paramagnetospirillum magneticum (strain ATCC 700264 / AMB-1) (Magnetospirillum magneticum).